Reading from the N-terminus, the 77-residue chain is Liver-expressed antimicrobial peptide 2 (77 aa).

Residues 1–22 (MWHLKLCAVLMIFLLLLGQTDG) form the signal peptide. Residues 23 to 37 (SPIPEVSSAKRRPRR) constitute a propeptide that is removed on maturation. Cystine bridges form between cysteine 54-cysteine 65 and cysteine 60-cysteine 70.

This sequence belongs to the LEAP2 family.

The protein localises to the secreted. Its function is as follows. Has an antimicrobial activity. This Macaca mulatta (Rhesus macaque) protein is Liver-expressed antimicrobial peptide 2 (LEAP2).